The primary structure comprises 122 residues: Large ribosomal subunit protein bL12 (122 aa).

The protein belongs to the bacterial ribosomal protein bL12 family. Homodimer. Part of the ribosomal stalk of the 50S ribosomal subunit. Forms a multimeric L10(L12)X complex, where L10 forms an elongated spine to which 2 to 4 L12 dimers bind in a sequential fashion. Binds GTP-bound translation factors.

In terms of biological role, forms part of the ribosomal stalk which helps the ribosome interact with GTP-bound translation factors. Is thus essential for accurate translation. The chain is Large ribosomal subunit protein bL12 from Xylella fastidiosa (strain M23).